We begin with the raw amino-acid sequence, 34 residues long: Somatostatin (34 aa).

Positions 1 to 20 are disordered; it reads AVERPRQDGQVHEPPGRERK. A disulfide bridge connects residues C23 and C34.

The protein belongs to the somatostatin family.

Its subcellular location is the secreted. Somatostatin inhibits the release of somatotropin. This chain is Somatostatin (sst), found in Myxine glutinosa (Atlantic hagfish).